Consider the following 257-residue polypeptide: Ribosomal RNA small subunit methyltransferase J (257 aa).

Residues 107–108 (RD), 123–124 (ER), and Asp-177 contribute to the S-adenosyl-L-methionine site.

The protein belongs to the methyltransferase superfamily. RsmJ family.

Its subcellular location is the cytoplasm. It carries out the reaction guanosine(1516) in 16S rRNA + S-adenosyl-L-methionine = N(2)-methylguanosine(1516) in 16S rRNA + S-adenosyl-L-homocysteine + H(+). Its function is as follows. Specifically methylates the guanosine in position 1516 of 16S rRNA. This is Ribosomal RNA small subunit methyltransferase J from Haemophilus influenzae (strain PittGG).